Reading from the N-terminus, the 491-residue chain is UDP-N-acetylmuramate--L-alanine ligase (491 aa).

ATP is bound at residue 126-132; the sequence is GTHGKTT.

The protein belongs to the MurCDEF family.

The protein resides in the cytoplasm. The enzyme catalyses UDP-N-acetyl-alpha-D-muramate + L-alanine + ATP = UDP-N-acetyl-alpha-D-muramoyl-L-alanine + ADP + phosphate + H(+). Its pathway is cell wall biogenesis; peptidoglycan biosynthesis. Cell wall formation. The sequence is that of UDP-N-acetylmuramate--L-alanine ligase from Klebsiella pneumoniae subsp. pneumoniae (strain ATCC 700721 / MGH 78578).